The chain runs to 437 residues: CCA-adding enzyme (437 aa).

ATP is bound by residues S47 and R50. S47 and R50 together coordinate CTP. Residues E59, D61, and D110 each coordinate Mg(2+). ATP is bound by residues H133, K152, and Y161. Residues H133, K152, and Y161 each contribute to the CTP site.

This sequence belongs to the tRNA nucleotidyltransferase/poly(A) polymerase family. Archaeal CCA-adding enzyme subfamily. Homodimer. The cofactor is Mg(2+).

It carries out the reaction a tRNA precursor + 2 CTP + ATP = a tRNA with a 3' CCA end + 3 diphosphate. The catalysed reaction is a tRNA with a 3' CCA end + 2 CTP + ATP = a tRNA with a 3' CCACCA end + 3 diphosphate. Catalyzes the addition and repair of the essential 3'-terminal CCA sequence in tRNAs without using a nucleic acid template. Adds these three nucleotides in the order of C, C, and A to the tRNA nucleotide-73, using CTP and ATP as substrates and producing inorganic pyrophosphate. tRNA 3'-terminal CCA addition is required both for tRNA processing and repair. Also involved in tRNA surveillance by mediating tandem CCA addition to generate a CCACCA at the 3' terminus of unstable tRNAs. While stable tRNAs receive only 3'-terminal CCA, unstable tRNAs are marked with CCACCA and rapidly degraded. The structural flexibility of RNA controls the choice between CCA versus CCACCA addition: following the first CCA addition cycle, nucleotide-binding to the active site triggers a clockwise screw motion, producing torque on the RNA. This ejects stable RNAs, whereas unstable RNAs are refolded while bound to the enzyme and subjected to a second CCA catalytic cycle. This chain is CCA-adding enzyme, found in Archaeoglobus fulgidus (strain ATCC 49558 / DSM 4304 / JCM 9628 / NBRC 100126 / VC-16).